A 186-amino-acid polypeptide reads, in one-letter code: MLKTLVQLFLVVAGFAPGFGYDKYTTHIQNGNPYNLTVDMTPFIKINESYYVFGQTKVNWYVAYENCRRLQSELVTFETAEEFDAIAAFLNARGDRSEHWTSGNDLGKTGTHYWFSNAQLVTIKRWAPKQPDNAGGREHCIHLGYIYGYSTEFQLNDRPCHNHASSLFKYICEAPKQETVSIVVWK.

A signal peptide spans 1-20; the sequence is MLKTLVQLFLVVAGFAPGFG. N-linked (GlcNAc...) asparagine glycosylation is found at Asn-35 and Asn-47. In terms of domain architecture, C-type lectin spans 46-169; it reads INESYYVFGQ…CHNHASSLFK (124 aa). A disulfide bridge links Cys-140 with Cys-160.

It localises to the secreted. Functionally, galactose-specific lectin that displays calcium-dependent activity. Binds to the surface of hemocytes and enhances hemocyte encapsulation and melanization. This is likely by interacting with carbohydrates on the surface of the hemocytes. Also displays agglutination activity against the Gram-negative bacterium E.coli. This Drosophila melanogaster (Fruit fly) protein is C-type lectin 37Da.